A 393-amino-acid polypeptide reads, in one-letter code: Digeranylgeranylglycerophospholipid reductase (393 aa).

Positions 13, 32, 43, 44, 46, 95, 119, 274, and 286 each coordinate FAD. 2 residues coordinate a 2,3-bis-O-(geranylgeranyl)-sn-glycerol 1-phospholipid: Lys-327 and Gly-363.

Belongs to the geranylgeranyl reductase family. DGGGPL reductase subfamily. Requires FAD as cofactor.

The catalysed reaction is a 2,3-bis-O-phytanyl-sn-glycerol 1-phospholipid + 8 A = a 2,3-bis-O-(geranylgeranyl)-sn-glycerol 1-phospholipid + 8 AH2. The enzyme catalyses 2,3-bis-O-(phytanyl)-sn-glycerol 1-phosphate + 8 A = 2,3-bis-O-(geranylgeranyl)-sn-glycerol 1-phosphate + 8 AH2. It catalyses the reaction CDP-2,3-bis-O-(geranylgeranyl)-sn-glycerol + 8 AH2 = CDP-2,3-bis-O-(phytanyl)-sn-glycerol + 8 A. It carries out the reaction archaetidylserine + 8 AH2 = 2,3-bis-O-phytanyl-sn-glycero-3-phospho-L-serine + 8 A. Its pathway is membrane lipid metabolism; glycerophospholipid metabolism. Its function is as follows. Is involved in the reduction of 2,3-digeranylgeranylglycerophospholipids (unsaturated archaeols) into 2,3-diphytanylglycerophospholipids (saturated archaeols) in the biosynthesis of archaeal membrane lipids. Catalyzes the formation of archaetidic acid (2,3-di-O-phytanyl-sn-glyceryl phosphate) from 2,3-di-O-geranylgeranylglyceryl phosphate (DGGGP) via the hydrogenation of each double bond of the isoprenoid chains. Is also probably able to reduce double bonds of geranyl groups in CDP-2,3-bis-O-(geranylgeranyl)-sn-glycerol and archaetidylserine, thus acting at various stages in the biosynthesis of archaeal membrane lipids. The sequence is that of Digeranylgeranylglycerophospholipid reductase from Pyrococcus furiosus (strain ATCC 43587 / DSM 3638 / JCM 8422 / Vc1).